Reading from the N-terminus, the 222-residue chain is MSAFGHDEAWMEAGGFGLEAAERTEYQSLCKSKLLFLGEQSVGKTSIISRFMYNSFGCACQATVGIDFLSKTMYLEDQIVQLQLWDTAGQERFHSLIPSYIRDSTIAVVVYDITNINSFKETDKWVEHVRAERGDDVVIMLLGNKIDLDNKRQVTAEQGEEKSRNLNVMFIETSAKTGYNVKKLFRRVASALLSTRTSPPPKEGTVEIELESFEESGNRSYC.

Residues Ser-41, Val-42, Gly-43, Lys-44, Thr-45, Ser-46, and Thr-63 each coordinate GTP. A Mg(2+)-binding site is contributed by Thr-45. The tract at residues 58–66 (CACQATVGI) is switch-I. Mg(2+) contacts are provided by Thr-63 and Asp-86. 7 residues coordinate GTP: Gly-89, Asn-144, Lys-145, Asp-147, Ser-174, Ala-175, and Lys-176. A switch-II region spans residues 89 to 105 (GQERFHSLIPSYIRDST). Cys-222 is lipidated: S-geranylgeranyl cysteine.

The protein belongs to the small GTPase superfamily. Rab family. Requires Mg(2+) as cofactor. As to expression, widely expressed in brain, testis, lung, heart, ovary, colon, kidney, uterus and spleen but not in liver.

Its subcellular location is the cytoplasm. It catalyses the reaction GTP + H2O = GDP + phosphate + H(+). Regulated by guanine nucleotide exchange factors (GEFs) which promote the exchange of bound GDP for free GTP. Regulated by GTPase activating proteins (GAPs) which increase the GTP hydrolysis activity. Inhibited by GDP dissociation inhibitors (GDIs). Its function is as follows. The small GTPases Rab are key regulators of intracellular membrane trafficking, from the formation of transport vesicles to their fusion with membranes. Rabs cycle between an inactive GDP-bound form and an active GTP-bound form that is able to recruit to membranes different sets of downstream effectors directly responsible for vesicle formation, movement, tethering and fusion. RAB41 is required for normal Golgi ribbon organization and ER-to-Golgi trafficking. In Homo sapiens (Human), this protein is Ras-related protein Rab-41.